The following is a 45-amino-acid chain: FLGTINLSLCEEERDADEEERRDEPDESNVEVKKRFFFLSRIFGK.

Residues 1-10 form the signal peptide; the sequence is FLGTINLSLC. Residues 11–35 constitute a propeptide that is removed on maturation; sequence EEERDADEEERRDEPDESNVEVKKR. Position 43 is a phenylalanine amide (Phe-43).

Belongs to the frog skin active peptide (FSAP) family. Temporin subfamily.

Its subcellular location is the secreted. The protein resides in the target cell membrane. In terms of biological role, non-amphipathic alpha-helical antimicrobial peptide with potent activity against some Gram-positive bacteria (including methicillin-resistant Staphylococcus aureus (MRSA)), weak activity against Gram-negative bacteria and no activity against fungi. Permeabilizates membranes through a detergent-like effect probably via the carpet mechanism. More precisely, it strongly and selectively perturbs anionic bilayers membranes by interacting with the polar headgroups and the glycerol backbone region of the phospholipids, hence disrupting the acyl chain packing of the bilayer. Is not active against Leishmania (promastigote and axenic amastigote forms). Does not show hemolytic activity. Does not show toxicity for human THP-1-derived macrophages. The sequence is that of Temporin-SHf from Pelophylax saharicus (Sahara frog).